The sequence spans 362 residues: MRTVGVEEELLLVDPETGEPKALSTAVLARAEQVDPDQDVFEKELHGQMLEFATHPQTDMAALGAEIVRCRKEAARHAGEAGCAVAALATSPLPVSPSIAMNRRYQWMAEQYGIAMQEQLTCGCHVHVAVESDEEGVAVVDRIRPWLPVLVALSANSPFWQGRDSSYESYRSRVWGRWPSAGPTELFGSPERYHRQVADMVATGVILDDGMVYFDARLSHRYPTVEIRVADVCLHPDTAQLIATLARGLVESAARDWRAGREPEDHSVSLLRLAAWQAARAGLSGELLHPVTMRRLRAESVVRALLEHVGDALADAGDLDLAHEAVAELLERGNGARVQRELLERTGSLRDTVTECVRQTQG.

It belongs to the glutamate--cysteine ligase type 2 family. YbdK subfamily.

It carries out the reaction L-cysteine + L-glutamate + ATP = gamma-L-glutamyl-L-cysteine + ADP + phosphate + H(+). Its function is as follows. ATP-dependent carboxylate-amine ligase which exhibits weak glutamate--cysteine ligase activity. The polypeptide is Putative glutamate--cysteine ligase 2-1 (Streptomyces avermitilis (strain ATCC 31267 / DSM 46492 / JCM 5070 / NBRC 14893 / NCIMB 12804 / NRRL 8165 / MA-4680)).